The following is an 86-amino-acid chain: Small ribosomal subunit protein bS20 (86 aa).

Belongs to the bacterial ribosomal protein bS20 family.

Its function is as follows. Binds directly to 16S ribosomal RNA. The protein is Small ribosomal subunit protein bS20 of Bifidobacterium longum subsp. infantis (strain ATCC 15697 / DSM 20088 / JCM 1222 / NCTC 11817 / S12).